The chain runs to 370 residues: MQQDKVNLLGLNQKAIEDFFISIGEKKFHARQVFKWIHKKGVIDFDAMTDLGKNLRHKLKEKAQITIPKVVFSKASKDGTHKWLIDVGGSAVETVFIPEEGRGTLCVSSQVGCTLNCSFCSTGKQGFNRNLSAAEVIAQLWIAARTLSKTDGEHDFTVTNIVMMGMGEPLMNFENVVPAMDIMMDDLAYGLSRRKVTLSTSGVVPRIYDLLEQSGVSLAVSLHAPNDMLRNEIVPINKKYNIDELLEACKLYAQNGPHKHITFEYTLMEEVNDNLSDAEELVALLKSREVPAKINLIPFNPYPGTPYKKPSNNRIHRFKEFLQHNGFVTTVRKTRGDDIDAACGQLAGDVMDKTNRKQRYLKKLGDTNAN.

Glu-93 acts as the Proton acceptor in catalysis. The Radical SAM core domain occupies 99-337 (EEGRGTLCVS…VTTVRKTRGD (239 aa)). A disulfide bridge links Cys-106 with Cys-343. The [4Fe-4S] cluster site is built by Cys-113, Cys-117, and Cys-120. S-adenosyl-L-methionine contacts are provided by residues 167–168 (GE), Ser-199, 221–223 (SLH), and Asn-300. Cys-343 serves as the catalytic S-methylcysteine intermediate.

The protein belongs to the radical SAM superfamily. RlmN family. It depends on [4Fe-4S] cluster as a cofactor.

It localises to the cytoplasm. The enzyme catalyses adenosine(2503) in 23S rRNA + 2 reduced [2Fe-2S]-[ferredoxin] + 2 S-adenosyl-L-methionine = 2-methyladenosine(2503) in 23S rRNA + 5'-deoxyadenosine + L-methionine + 2 oxidized [2Fe-2S]-[ferredoxin] + S-adenosyl-L-homocysteine. The catalysed reaction is adenosine(37) in tRNA + 2 reduced [2Fe-2S]-[ferredoxin] + 2 S-adenosyl-L-methionine = 2-methyladenosine(37) in tRNA + 5'-deoxyadenosine + L-methionine + 2 oxidized [2Fe-2S]-[ferredoxin] + S-adenosyl-L-homocysteine. Its function is as follows. Specifically methylates position 2 of adenine 2503 in 23S rRNA and position 2 of adenine 37 in tRNAs. m2A2503 modification seems to play a crucial role in the proofreading step occurring at the peptidyl transferase center and thus would serve to optimize ribosomal fidelity. This Francisella tularensis subsp. mediasiatica (strain FSC147) protein is Dual-specificity RNA methyltransferase RlmN.